The primary structure comprises 319 residues: MATH domain and coiled-coil domain-containing protein At3g58200 (319 aa).

Positions 6 to 132 constitute an MATH domain; it reads DNKFRWVIKN…NEEVKIVVEV (127 aa). The stretch at 255 to 302 forms a coiled coil; sequence FKVDWLEKKLEEVKEKKKEEQIGETRMQEMKVFKQKCSDIEALMEREK.

In Arabidopsis thaliana (Mouse-ear cress), this protein is MATH domain and coiled-coil domain-containing protein At3g58200.